We begin with the raw amino-acid sequence, 156 residues long: ATP synthase subunit b (156 aa).

The chain crosses the membrane as a helical span at residues 7–27 (LFAQMVVFLILAWFTMKFVWP).

The protein belongs to the ATPase B chain family. As to quaternary structure, F-type ATPases have 2 components, F(1) - the catalytic core - and F(0) - the membrane proton channel. F(1) has five subunits: alpha(3), beta(3), gamma(1), delta(1), epsilon(1). F(0) has three main subunits: a(1), b(2) and c(10-14). The alpha and beta chains form an alternating ring which encloses part of the gamma chain. F(1) is attached to F(0) by a central stalk formed by the gamma and epsilon chains, while a peripheral stalk is formed by the delta and b chains.

The protein resides in the cell inner membrane. Its function is as follows. F(1)F(0) ATP synthase produces ATP from ADP in the presence of a proton or sodium gradient. F-type ATPases consist of two structural domains, F(1) containing the extramembraneous catalytic core and F(0) containing the membrane proton channel, linked together by a central stalk and a peripheral stalk. During catalysis, ATP synthesis in the catalytic domain of F(1) is coupled via a rotary mechanism of the central stalk subunits to proton translocation. In terms of biological role, component of the F(0) channel, it forms part of the peripheral stalk, linking F(1) to F(0). The sequence is that of ATP synthase subunit b from Paraburkholderia phymatum (strain DSM 17167 / CIP 108236 / LMG 21445 / STM815) (Burkholderia phymatum).